The chain runs to 350 residues: Very-long-chain 3-oxoacyl-CoA reductase (350 aa).

Residues 28 to 48 (SLVLLAGIGALSVGTFALRLV) form a helical membrane-spanning segment. NADP(+) is bound by residues Val79, Asp134, Asn161, Lys196, Tyr228, Lys232, Val261, and Ser263. The Proton donor role is filled by Tyr228. Residue Lys232 is the Lowers pKa of active site Tyr of the active site.

The protein belongs to the short-chain dehydrogenases/reductases (SDR) family.

The protein localises to the endoplasmic reticulum membrane. The enzyme catalyses a very-long-chain (3R)-3-hydroxyacyl-CoA + NADP(+) = a very-long-chain 3-oxoacyl-CoA + NADPH + H(+). It participates in lipid metabolism; fatty acid biosynthesis. Functionally, component of the microsomal membrane bound fatty acid elongation system, which produces the 26-carbon very long-chain fatty acids (VLCFA) from palmitate. Catalyzes the reduction of the 3-ketoacyl-CoA intermediate that is formed in each cycle of fatty acid elongation. VLCFAs serve as precursors for ceramide and sphingolipids. The sequence is that of Very-long-chain 3-oxoacyl-CoA reductase from Mycosarcoma maydis (Corn smut fungus).